Consider the following 59-residue polypeptide: Putative potassium channel toxin Ts25 (59 aa).

Positions 1-22 (MKAFYGILIIFILISMIHLSQQ) are cleaved as a signal peptide. 3 disulfide bridges follow: Cys29-Cys50, Cys35-Cys55, and Cys39-Cys57.

It belongs to the short scorpion toxin superfamily. Potassium channel inhibitor family. Alpha-KTx 04 subfamily. Expressed by the venom gland.

It localises to the secreted. Potently blocks Kv1.1/KCNA1 (85%), Kv1.2/KCNA2 (91%), Kv1.3/KCNA3 (89%), Kv1.6/KCNA6 (94%), and Shaker (97%). In Tityus serrulatus (Brazilian scorpion), this protein is Putative potassium channel toxin Ts25.